The primary structure comprises 156 residues: ATP synthase subunit b (156 aa).

Residues 3 to 23 (ITFTIFAQSIAFAALIWIVAT) traverse the membrane as a helical segment.

Belongs to the ATPase B chain family. F-type ATPases have 2 components, F(1) - the catalytic core - and F(0) - the membrane proton channel. F(1) has five subunits: alpha(3), beta(3), gamma(1), delta(1), epsilon(1). F(0) has three main subunits: a(1), b(2) and c(10-14). The alpha and beta chains form an alternating ring which encloses part of the gamma chain. F(1) is attached to F(0) by a central stalk formed by the gamma and epsilon chains, while a peripheral stalk is formed by the delta and b chains.

Its subcellular location is the cell inner membrane. Functionally, f(1)F(0) ATP synthase produces ATP from ADP in the presence of a proton or sodium gradient. F-type ATPases consist of two structural domains, F(1) containing the extramembraneous catalytic core and F(0) containing the membrane proton channel, linked together by a central stalk and a peripheral stalk. During catalysis, ATP synthesis in the catalytic domain of F(1) is coupled via a rotary mechanism of the central stalk subunits to proton translocation. In terms of biological role, component of the F(0) channel, it forms part of the peripheral stalk, linking F(1) to F(0). This chain is ATP synthase subunit b, found in Xylella fastidiosa (strain M12).